Here is a 233-residue protein sequence, read N- to C-terminus: Pilin-like protein PilA3 (233 aa).

Residues 1-4 constitute a propeptide, leader sequence; it reads MKRG. Phe-5 bears the N-methylphenylalanine mark. Residues 5 to 25 traverse the membrane as a helical segment; the sequence is FTLVEVLVAMAILVVVLAVGV. The disordered stretch occupies residues 121–143; that stretch reads LRRSDVNATPSSGSDCTTPPPNS. The span at 126–137 shows a compositional bias: polar residues; that stretch reads VNATPSSGSDCT.

Its subcellular location is the cell inner membrane. It is found in the cell outer membrane. The protein resides in the periplasm. In terms of biological role, plays an essential role in natural DNA transformation but is not required for pilus biogenesis. This chain is Pilin-like protein PilA3 (pilA3), found in Thermus thermophilus (strain ATCC BAA-163 / DSM 7039 / HB27).